The primary structure comprises 314 residues: Ferric-anguibactin transport system permease protein FatD (314 aa).

10 helical membrane passes run 1–21, 49–69, 76–96, 103–123, 132–152, 180–200, 207–226, 230–252, 265–285, and 288–308; these read MTFRMILAFFTLCATSLFFGA, VALILTGSGLAMCGVILQHIV, PGTTGSLDAAKLGILVSIVML, ERMFFAVLFCFAAGLVYIAII, ALVPVIGLMFGSVLSALAEFY, IIFLILPITLLTYLYAHRFTV, IASNLGISYAMTAALGLILV, VAVTVVTVGAIHFVGLVIPNLVA, IVALGGASLLIFCDVISRVVL, and FEVPVGLTASAVGGVMFLAFL.

It belongs to the binding-protein-dependent transport system permease family. FecCD subfamily. Part of an iron transport system composed of the outer membrane receptor FatA, the periplasmic binding protein FatB and the inner membrane proteins FatC and FatD.

The protein resides in the cell inner membrane. In terms of biological role, involved in the uptake of iron in complex with the siderophore anguibactin. Responsible for the translocation of ferric-anguibactin across the cytoplasmic membrane. This chain is Ferric-anguibactin transport system permease protein FatD, found in Vibrio anguillarum (strain ATCC 68554 / 775) (Listonella anguillarum).